The sequence spans 374 residues: Agmatine deiminase (374 aa).

The agmatine site is built by D220 and D226. C366 (amidino-cysteine intermediate) is an active-site residue.

The protein belongs to the agmatine deiminase family. In terms of assembly, forms homodimers.

It catalyses the reaction agmatine + H2O = N-carbamoylputrescine + NH4(+). Its pathway is amine and polyamine biosynthesis; putrescine biosynthesis via agmatine pathway; N-carbamoylputrescine from agmatine: step 1/1. Mediates the hydrolysis of agmatine into N-carbamoylputrescine in the arginine decarboxylase (ADC) pathway of putrescine biosynthesis, a basic polyamine. The chain is Agmatine deiminase from Medicago truncatula (Barrel medic).